The primary structure comprises 103 residues: MKYSSTLSYTLIVHTTSSTNCKEYLNYCKVTSMDPFVSMFQTFLEVLTATVLAFTAYEAYERRMERQEKGEAMRDLIDLHRMRTIGDVIEKQEETKEKQAQGK.

The helical transmembrane segment at 35–57 (PFVSMFQTFLEVLTATVLAFTAY) threads the bilayer.

Its subcellular location is the host membrane. This is an uncharacterized protein from Acidianus bottle-shaped virus (isolate Italy/Pozzuoli) (ABV).